Reading from the N-terminus, the 362-residue chain is Phosphoserine aminotransferase (362 aa).

Serine 9 and arginine 42 together coordinate L-glutamate. Pyridoxal 5'-phosphate is bound by residues glycine 76–arginine 77, tryptophan 102, threonine 153, aspartate 174, and glutamine 197. Lysine 198 is subject to N6-(pyridoxal phosphate)lysine. Residue asparagine 239–threonine 240 participates in pyridoxal 5'-phosphate binding.

It belongs to the class-V pyridoxal-phosphate-dependent aminotransferase family. SerC subfamily. In terms of assembly, homodimer. Pyridoxal 5'-phosphate serves as cofactor.

The protein resides in the cytoplasm. The catalysed reaction is O-phospho-L-serine + 2-oxoglutarate = 3-phosphooxypyruvate + L-glutamate. The enzyme catalyses 4-(phosphooxy)-L-threonine + 2-oxoglutarate = (R)-3-hydroxy-2-oxo-4-phosphooxybutanoate + L-glutamate. It participates in amino-acid biosynthesis; L-serine biosynthesis; L-serine from 3-phospho-D-glycerate: step 2/3. Its pathway is cofactor biosynthesis; pyridoxine 5'-phosphate biosynthesis; pyridoxine 5'-phosphate from D-erythrose 4-phosphate: step 3/5. Functionally, catalyzes the reversible conversion of 3-phosphohydroxypyruvate to phosphoserine and of 3-hydroxy-2-oxo-4-phosphonooxybutanoate to phosphohydroxythreonine. The polypeptide is Phosphoserine aminotransferase (Salmonella newport (strain SL254)).